The chain runs to 504 residues: Maturase K (504 aa).

It belongs to the intron maturase 2 family. MatK subfamily.

Its subcellular location is the plastid. The protein localises to the chloroplast. Functionally, usually encoded in the trnK tRNA gene intron. Probably assists in splicing its own and other chloroplast group II introns. The polypeptide is Maturase K (Erythrina crista-galli (Cockspur coral tree)).